The sequence spans 652 residues: Interferon-induced GTP-binding protein Mx1 (652 aa).

The interval 1 to 27 is disordered; sequence MKERTSACRHGTPQKHPDTSEESQAME. In terms of domain architecture, Dynamin-type G spans 58 to 331; sequence DLALPAIAVI…LTSHICKSLP (274 aa). Positions 68-75 are G1 motif; sequence GDQSSGKS. 68-75 serves as a coordination point for GTP; it reads GDQSSGKS. Residues 93–95 are G2 motif; it reads VTR. Residues 169 to 172 form a G3 motif region; that stretch reads DLPG. GTP contacts are provided by residues 169 to 173 and 238 to 241; these read DLPGI and TKPD. The tract at residues 238-241 is G4 motif; the sequence is TKPD. A G5 motif region spans residues 270–273; that stretch reads KCRG. Residues 332–357 form a bundle signaling element (BSE) region; sequence ILENQINVNHQIASEELQKYGADIPE. Residues 357 to 526 form a middle domain region; the sequence is EDDSKRLSFL…HFQMEHIVYC (170 aa). The tract at residues 358–622 is stalk; that stretch reads DDSKRLSFLM…TSKCNWFLTE (265 aa). Residues 564-652 form the GED domain; the sequence is TTEMTQHLNA…AQRKLAKFSN (89 aa).

The protein belongs to the TRAFAC class dynamin-like GTPase superfamily. Dynamin/Fzo/YdjA family. In terms of assembly, homooligomer. Oligomerizes into multimeric filamentous or ring-like structures by virtue of its stalk domain. Oligomerization is critical for GTPase activity, protein stability, and recognition of viral target structures. Interacts with TRPC1, TRPC3, TRPC4, TRPC5, TRPC6 and TRPC7. Interacts with HSPA5. Interacts with TUBB/TUBB5. Interacts with DDX39A and DDX39B. In terms of processing, ISGylated.

It is found in the nucleus. The protein resides in the cytoplasm. Its subcellular location is the endoplasmic reticulum membrane. The protein localises to the perinuclear region. Functionally, interferon-induced dynamin-like GTPase which has antiviral activity against influenza A virus, (IAV) and Thogoto virus (THOV). Inhibits IAV by interfering with the process of primary transcription, probably by affecting the viral polymerase function. This is Interferon-induced GTP-binding protein Mx1 (Mx1) from Rattus norvegicus (Rat).